The sequence spans 546 residues: Chaperonin GroEL (546 aa).

ATP-binding positions include 30–33 (TLGP), Lys51, 87–91 (DGTTT), Gly415, 479–481 (NAA), and Asp495.

Belongs to the chaperonin (HSP60) family. In terms of assembly, forms a cylinder of 14 subunits composed of two heptameric rings stacked back-to-back. Interacts with the co-chaperonin GroES.

It is found in the cytoplasm. It carries out the reaction ATP + H2O + a folded polypeptide = ADP + phosphate + an unfolded polypeptide.. Its function is as follows. Together with its co-chaperonin GroES, plays an essential role in assisting protein folding. The GroEL-GroES system forms a nano-cage that allows encapsulation of the non-native substrate proteins and provides a physical environment optimized to promote and accelerate protein folding. In Pseudomonas putida (strain ATCC 47054 / DSM 6125 / CFBP 8728 / NCIMB 11950 / KT2440), this protein is Chaperonin GroEL.